The sequence spans 458 residues: Hepatocyte nuclear factor 3-beta (458 aa).

The interval 14–93 is transactivation domain 1; it reads DWSSYYAEPE…AGAMAGMSGS (80 aa). The Nuclear localization signal motif lies at 106-113; it reads LSPSLSPL. At threonine 156 the chain carries Phosphothreonine; by PKB/AKT1. Positions 159–252 form a DNA-binding region, fork-head; that stretch reads KPPYSYISLI…ENGCYLRRQK (94 aa). Serine 212 and serine 283 each carry phosphoserine. A disordered region spans residues 286-365; sequence QLGEAAGSAS…PGLPPEAHLK (80 aa). A compositionally biased stretch (polar residues) spans 294 to 310; that stretch reads ASETPAGTESPHSSASP. Threonine 301 bears the Phosphothreonine mark. 4 positions are modified to phosphoserine: serine 303, serine 306, serine 307, and serine 309. Residues 339 to 352 are compositionally biased toward low complexity; that stretch reads PGQQQQAAAHLLGP. Residues 361–458 are transactivation domain 2; sequence EAHLKPEHHY…VYSRPIMNSS (98 aa). Phosphoserine occurs at positions 437 and 458.

Binds DNA as a monomer. Binds TLE1. Interacts with FOXA1 and FOXA3. Interacts with PRKDC. Interacts with AKT1. Interacts with TET1; this interaction may recruit TET1 to specific genomic loci to mediate their demethylation. Phosphorylation on Thr-156 abolishes binding to target promoters and subsequent transcription activation upon insulin stimulation. Liver.

The protein localises to the nucleus. It localises to the cytoplasm. In terms of biological role, transcription factor that is involved in embryonic development, establishment of tissue-specific gene expression and regulation of gene expression in differentiated tissues. Is thought to act as a 'pioneer' factor opening the compacted chromatin for other proteins through interactions with nucleosomal core histones and thereby replacing linker histones at target enhancer and/or promoter sites. Binds DNA with the consensus sequence 5'-[AC]A[AT]T[AG]TT[GT][AG][CT]T[CT]-3'. In embryonic development is required for notochord formation. Involved in the development of multiple endoderm-derived organ systems such as the liver, pancreas and lungs; FOXA1 and FOXA2 seem to have at least in part redundant roles. Originally described as a transcription activator for a number of liver genes such as AFP, albumin, tyrosine aminotransferase, PEPCK, etc. Interacts with the cis-acting regulatory regions of these genes. Involved in glucose homeostasis; regulates the expression of genes important for glucose sensing in pancreatic beta-cells and glucose homeostasis. Involved in regulation of fat metabolism. Acts synergistically with ONECUT1 to activate transcription of female-specific CYP2C12; the function is inhibited by growth hormone-activated STAT5B. Acts synergistically with HNF4A to activate transcription of APOA1. The sequence is that of Hepatocyte nuclear factor 3-beta (Foxa2) from Rattus norvegicus (Rat).